A 180-amino-acid polypeptide reads, in one-letter code: ATP-dependent protease subunit HslV (180 aa).

Thr-6 is an active-site residue. Positions 164, 167, and 170 each coordinate Na(+).

Belongs to the peptidase T1B family. HslV subfamily. A double ring-shaped homohexamer of HslV is capped on each side by a ring-shaped HslU homohexamer. The assembly of the HslU/HslV complex is dependent on binding of ATP.

It is found in the cytoplasm. The enzyme catalyses ATP-dependent cleavage of peptide bonds with broad specificity.. Allosterically activated by HslU binding. Functionally, protease subunit of a proteasome-like degradation complex believed to be a general protein degrading machinery. This chain is ATP-dependent protease subunit HslV, found in Borrelia duttonii (strain Ly).